The primary structure comprises 124 residues: Small ribosomal subunit protein uS12 (124 aa).

Positions 1-42 (MPTIQQLVRKGRRPKVNKTKSPALRGNPQQRGVCSRVYTTTP) are disordered. Positions 9-18 (RKGRRPKVNK) are enriched in basic residues. Positions 27-42 (NPQQRGVCSRVYTTTP) are enriched in polar residues. Asp89 is subject to 3-methylthioaspartic acid.

It belongs to the universal ribosomal protein uS12 family. As to quaternary structure, part of the 30S ribosomal subunit. Contacts proteins S8 and S17. May interact with IF1 in the 30S initiation complex.

Its function is as follows. With S4 and S5 plays an important role in translational accuracy. In terms of biological role, interacts with and stabilizes bases of the 16S rRNA that are involved in tRNA selection in the A site and with the mRNA backbone. Located at the interface of the 30S and 50S subunits, it traverses the body of the 30S subunit contacting proteins on the other side and probably holding the rRNA structure together. The combined cluster of proteins S8, S12 and S17 appears to hold together the shoulder and platform of the 30S subunit. This is Small ribosomal subunit protein uS12 from Tropheryma whipplei (strain TW08/27) (Whipple's bacillus).